A 141-amino-acid chain; its full sequence is Large ribosomal subunit protein uL16 (141 aa).

Residues 1–19 (MLMPKKTKYRKQQKGRNRG) show a composition bias toward basic residues. The segment at 1–22 (MLMPKKTKYRKQQKGRNRGKAY) is disordered.

The protein belongs to the universal ribosomal protein uL16 family. Part of the 50S ribosomal subunit.

In terms of biological role, binds 23S rRNA and is also seen to make contacts with the A and possibly P site tRNAs. The polypeptide is Large ribosomal subunit protein uL16 (Nitratiruptor sp. (strain SB155-2)).